The sequence spans 357 residues: Chorismate synthase (357 aa).

The NADP(+) site is built by Arg48 and Arg54. Residues 125 to 127 (RSS), 243 to 244 (NA), Gly283, 298 to 302 (KPTSS), and Arg324 each bind FMN.

The protein belongs to the chorismate synthase family. Homotetramer. Requires FMNH2 as cofactor.

It catalyses the reaction 5-O-(1-carboxyvinyl)-3-phosphoshikimate = chorismate + phosphate. Its pathway is metabolic intermediate biosynthesis; chorismate biosynthesis; chorismate from D-erythrose 4-phosphate and phosphoenolpyruvate: step 7/7. In terms of biological role, catalyzes the anti-1,4-elimination of the C-3 phosphate and the C-6 proR hydrogen from 5-enolpyruvylshikimate-3-phosphate (EPSP) to yield chorismate, which is the branch point compound that serves as the starting substrate for the three terminal pathways of aromatic amino acid biosynthesis. This reaction introduces a second double bond into the aromatic ring system. The chain is Chorismate synthase from Pasteurella multocida (strain Pm70).